A 372-amino-acid chain; its full sequence is Invasion protein InvE (372 aa).

The segment covering 1 to 19 has biased composition (polar residues); it reads MIPGSTSGISFSRILSRQA. The segment at 1-47 is disordered; the sequence is MIPGSTSGISFSRILSRQASHQDATQHTDAQQAEIQQAAEDSSPGAE. The segment covering 21–40 has biased composition (low complexity); it reads HQDATQHTDAQQAEIQQAAE.

The protein localises to the cell membrane. Its function is as follows. Involved in the triggering of intracellular events that lead to microbial internalization. These events include increase in calcium level, redistribution of actin microfilaments, and changes in the normal structure of the microvilli. Encoded within the type III secretion system (SPI-1 T3SS), it is essential for the translocation of protein effectors into host cells. Forms a complex with SipB and SipC in the presence of their chaperone SicA. The protein is Invasion protein InvE (invE) of Salmonella typhi.